A 666-amino-acid polypeptide reads, in one-letter code: Probable potassium transport system protein Kup (666 aa).

12 helical membrane passes run 53–73, 89–109, 144–164, 181–201, 212–232, 247–267, 291–311, 324–344, 381–401, 411–431, 441–461, and 463–483; these read FWALTLGSIGVVFGDIGTSPL, VTPVIVLGVLSLILWSLFIVV, LLLLALGVVGASMFIGDSMIT, PEFGNYVVPLTLLILVMLFAV, AFAPVMALWFVAIAVLGALHI, AIHFLLNHGLIGLVIMGLVFL, WFCLVLPALLLNYFGQGALIL, LAPAPMILPLVILATAATVIA, IYLPRVNILLLIGVLLLVLLF, YGIAVSTTMVADGIMGFVVVW, AAALVVPLVVVDIMFFSANLL, and LLDGAWVPLLFGLIMVVLIWT.

This sequence belongs to the HAK/KUP transporter (TC 2.A.72) family.

The protein localises to the cell inner membrane. The catalysed reaction is K(+)(in) + H(+)(in) = K(+)(out) + H(+)(out). Transport of potassium into the cell. Likely operates as a K(+):H(+) symporter. This chain is Probable potassium transport system protein Kup, found in Nitrobacter hamburgensis (strain DSM 10229 / NCIMB 13809 / X14).